A 313-amino-acid chain; its full sequence is Olfactory receptor 10K1 (313 aa).

At 1 to 25 (MEQVNKTVVREFVVLGFSSLARLQQ) the chain is on the extracellular side. Residue Asn-5 is glycosylated (N-linked (GlcNAc...) asparagine). The helical transmembrane segment at 26–46 (LLFVIFLLLYLFTLGTNAIII) threads the bilayer. The Cytoplasmic portion of the chain corresponds to 47-54 (STIVLDRA). The chain crosses the membrane as a helical span at residues 55–75 (LHTPMYFFLAILSCSEICYTF). Over 76–99 (VIVPKMLVDLLSQKKTISFLGCAI) the chain is Extracellular. Residues 100 to 120 (QMFSFLFFGSSHSFLLAAMGY) form a helical membrane-spanning segment. Over 121–139 (DRYMAICNPLRYSVLMGHG) the chain is Cytoplasmic. The helical transmembrane segment at 140 to 160 (VCMGLMAAACACGFTVSLVTT) threads the bilayer. The Extracellular segment spans residues 161–197 (SLVFHLPFHSSNQLHHFFCDISPVLKLASQHSGFSQL). The chain crosses the membrane as a helical span at residues 198-217 (VIFMLGVFALVIPLLLILVS). At 218 to 237 (YIRIISAILKIPSSVGRYKT) the chain is on the cytoplasmic side. Residues 238 to 258 (FSTCASHLIVVTVHYSCASFI) form a helical membrane-spanning segment. Residues 259–271 (YLRPKTNYTSSQD) lie on the Extracellular side of the membrane. An N-linked (GlcNAc...) asparagine glycan is attached at Asn-265. Residues 272 to 292 (TLISVSYTILTPLFNPMIYSL) traverse the membrane as a helical segment. Residues 293–313 (RNKEFKSALRRTIGQTFYPLS) are Cytoplasmic-facing.

The protein belongs to the G-protein coupled receptor 1 family.

It is found in the cell membrane. Functionally, odorant receptor. The protein is Olfactory receptor 10K1 (OR10K1) of Homo sapiens (Human).